A 669-amino-acid polypeptide reads, in one-letter code: DNA ligase 2 (669 aa).

NAD(+) is bound by residues 35–39 and 83–84; these read DKEYD and SL. Lysine 125 serves as the catalytic N6-AMP-lysine intermediate. 3 residues coordinate NAD(+): arginine 147, glutamate 181, and lysine 317. Zn(2+) contacts are provided by cysteine 410, cysteine 413, cysteine 426, and cysteine 432. The BRCT domain maps to 590–669; it reads VVENAFTGKT…EEFEQLINNM (80 aa).

It belongs to the NAD-dependent DNA ligase family. LigA subfamily. It depends on Mg(2+) as a cofactor. Requires Mn(2+) as cofactor.

It carries out the reaction NAD(+) + (deoxyribonucleotide)n-3'-hydroxyl + 5'-phospho-(deoxyribonucleotide)m = (deoxyribonucleotide)n+m + AMP + beta-nicotinamide D-nucleotide.. In terms of biological role, DNA ligase that catalyzes the formation of phosphodiester linkages between 5'-phosphoryl and 3'-hydroxyl groups in double-stranded DNA using NAD as a coenzyme and as the energy source for the reaction. It is essential for DNA replication and repair of damaged DNA. The chain is DNA ligase 2 from Clostridium acetobutylicum (strain ATCC 824 / DSM 792 / JCM 1419 / IAM 19013 / LMG 5710 / NBRC 13948 / NRRL B-527 / VKM B-1787 / 2291 / W).